The following is a 620-amino-acid chain: uncharacterized protein (620 aa).

2 stretches are compositionally biased toward low complexity: residues 278-290 (RPPS…AGEP) and 301-319 (ASTA…TRPT). A disordered region spans residues 278–620 (RPPSGSGEAA…KSQPPAAHTA (343 aa)). Basic and acidic residues predominate over residues 336–411 (ARPESEEQTD…QESQVARRDE (76 aa)). Composition is skewed to pro residues over residues 446 to 470 (VPGP…PPMT) and 481 to 500 (RCPP…PPRP). 2 stretches are compositionally biased toward low complexity: residues 501-512 (SSDTPLSAVSRP) and 522-541 (TARV…YSPA). Positions 542 to 551 (PLSPPSPVSP) are enriched in pro residues. The span at 597–607 (SVPSSASPSAS) shows a compositional bias: low complexity.

This sequence belongs to the herpesviridae US22 family.

This is an uncharacterized protein from Homo sapiens (Human).